Consider the following 125-residue polypeptide: Succinate dehydrogenase cytochrome b560 subunit (125 aa).

3 helical membrane-spanning segments follow: residues 29–49, 68–88, and 104–124; these read ISGV…KLAT, ILPW…INGI, and IIKD…FKFI. Heme is bound at residue histidine 83.

The protein belongs to the cytochrome b560 family. Forms part of complex II containing four subunits: a 70 kDa flavoprotein (FP), a 27 kDa iron-sulfur protein (IP), a cytochrome B and a membrane-anchoring protein. It depends on heme as a cofactor.

The protein localises to the mitochondrion inner membrane. It functions in the pathway carbohydrate metabolism; tricarboxylic acid cycle. In terms of biological role, membrane-anchoring subunit of succinate dehydrogenase (SDH) that is involved in complex II of the mitochondrial electron transport chain and is responsible for transferring electrons from succinate to ubiquinone (coenzyme Q). The polypeptide is Succinate dehydrogenase cytochrome b560 subunit (SDH3) (Porphyra purpurea (Red seaweed)).